Consider the following 312-residue polypeptide: HTH-type transcriptional regulator PtxR (312 aa).

The HTH lysR-type domain maps to 11–68 (LNLNHLYAFVAVAEHNSFTAAAEALGLSKSLLSEQLRRLEADLGIQLLTRTTRRMTLT). Residues 28–47 (FTAAAEALGLSKSLLSEQLR) constitute a DNA-binding region (H-T-H motif).

This sequence belongs to the LysR transcriptional regulatory family. As to quaternary structure, monomer in solution. May dimerize on binding to DNA. Interacts with PtxS in the absence of 2-ketogluconate. Binding of the 2-ketogluconate effector to PtxS causes PtxS/PtxR complex dissociation.

With respect to regulation, negatively regulated by PtxS, which interacts with PtxR and prevents its activity. Its function is as follows. Plays an important role in the regulation of the production of the virulence factor exotoxin A (toxA), via positive regulation of the transcription of the toxA gene. Acts by binding directly to the toxA promoter region. Besides toxA, PtxR modulates the expression of genes that code for the QS-controlled virulence factors. It negatively regulates the expression of the rhamnolipid and pyocyanine genes, through the autoinducer synthase RhlI, and the PQS synthesis operon pqsABCDE, while it positively regulates the expression of lasB through the autoinducer synthase LasI. Also positively regulates the expression of the exotoxin A regulatory protein (toxR or regA). Functionally, in addition, is involved in the positive regulation of glucose metabolism via the regulation of the expression of the kgu and gad operons. Acts by binding directly to the promoter region of the kgu and gad operons. In Pseudomonas aeruginosa (strain ATCC 15692 / DSM 22644 / CIP 104116 / JCM 14847 / LMG 12228 / 1C / PRS 101 / PAO1), this protein is HTH-type transcriptional regulator PtxR.